A 154-amino-acid polypeptide reads, in one-letter code: Actin-related protein 2/3 complex subunit 5 (154 aa).

At Thr142 the chain carries Phosphothreonine.

It belongs to the ARPC5 family. As to quaternary structure, component of the Arp2/3 complex composed of ARP2, ARP3, ARC40/p41-ARC, ARC35/p34-ARC, ARC18/p21-ARC, ARC19/p20-ARC and ARC16/p16-ARC.

It localises to the cytoplasm. The protein localises to the cytoskeleton. The protein resides in the actin patch. In terms of biological role, functions as a component of the Arp2/3 complex which is involved in regulation of actin polymerization and together with an activating nucleation-promoting factor (NPF) mediates the formation of branched actin networks. The polypeptide is Actin-related protein 2/3 complex subunit 5 (ARC15) (Saccharomyces cerevisiae (strain ATCC 204508 / S288c) (Baker's yeast)).